We begin with the raw amino-acid sequence, 423 residues long: Serine hydroxymethyltransferase (423 aa).

(6S)-5,6,7,8-tetrahydrofolate contacts are provided by residues L120 and 124–126 (GHL). K229 carries the N6-(pyridoxal phosphate)lysine modification. 353–355 (SPF) contributes to the (6S)-5,6,7,8-tetrahydrofolate binding site.

It belongs to the SHMT family. Homodimer. Pyridoxal 5'-phosphate serves as cofactor.

Its subcellular location is the cytoplasm. The enzyme catalyses (6R)-5,10-methylene-5,6,7,8-tetrahydrofolate + glycine + H2O = (6S)-5,6,7,8-tetrahydrofolate + L-serine. The protein operates within one-carbon metabolism; tetrahydrofolate interconversion. It participates in amino-acid biosynthesis; glycine biosynthesis; glycine from L-serine: step 1/1. Functionally, catalyzes the reversible interconversion of serine and glycine with tetrahydrofolate (THF) serving as the one-carbon carrier. This reaction serves as the major source of one-carbon groups required for the biosynthesis of purines, thymidylate, methionine, and other important biomolecules. Also exhibits THF-independent aldolase activity toward beta-hydroxyamino acids, producing glycine and aldehydes, via a retro-aldol mechanism. The polypeptide is Serine hydroxymethyltransferase (Prochlorococcus marinus subsp. pastoris (strain CCMP1986 / NIES-2087 / MED4)).